The following is a 125-amino-acid chain: Glycine cleavage system H protein (125 aa).

Residues 23–105 enclose the Lipoyl-binding domain; sequence VSTVGITEHA…FEGGWLFKVR (83 aa). Position 64 is an N6-lipoyllysine (Lys-64).

This sequence belongs to the GcvH family. As to quaternary structure, the glycine cleavage system is composed of four proteins: P, T, L and H. Requires (R)-lipoate as cofactor.

Functionally, the glycine cleavage system catalyzes the degradation of glycine. The H protein shuttles the methylamine group of glycine from the P protein to the T protein. In Streptomyces coelicolor (strain ATCC BAA-471 / A3(2) / M145), this protein is Glycine cleavage system H protein.